A 333-amino-acid polypeptide reads, in one-letter code: Trans-1,2-dihydrobenzene-1,2-diol dehydrogenase (333 aa).

The protein belongs to the Gfo/Idh/MocA family. In terms of assembly, homodimer.

The catalysed reaction is (1R,2R)-1,2-dihydrobenzene-1,2-diol + NADP(+) = catechol + NADPH + H(+). It carries out the reaction D-xylose + NADP(+) = D-xylono-1,5-lactone + NADPH + H(+). This Mus musculus (Mouse) protein is Trans-1,2-dihydrobenzene-1,2-diol dehydrogenase (Dhdh).